Consider the following 217-residue polypeptide: LexA repressor (217 aa).

Residues 28–48 (RAEIAAEFGFSSPNAAEEHLR) constitute a DNA-binding region (H-T-H motif). Residues S136 and K173 each act as for autocatalytic cleavage activity in the active site.

It belongs to the peptidase S24 family. As to quaternary structure, homodimer.

It carries out the reaction Hydrolysis of Ala-|-Gly bond in repressor LexA.. In terms of biological role, represses a number of genes involved in the response to DNA damage (SOS response), including recA and lexA. In the presence of single-stranded DNA, RecA interacts with LexA causing an autocatalytic cleavage which disrupts the DNA-binding part of LexA, leading to derepression of the SOS regulon and eventually DNA repair. This is LexA repressor from Cupriavidus necator (strain ATCC 17699 / DSM 428 / KCTC 22496 / NCIMB 10442 / H16 / Stanier 337) (Ralstonia eutropha).